The sequence spans 684 residues: Galactocerebrosidase (684 aa).

A signal peptide spans 1–42; that stretch reads MANSQPKASQQRQAKVMTAAAGSASRVAVPLLLCALLVPGGA. Threonine 109, tryptophan 151, and asparagine 197 together coordinate substrate. Glutamate 198 (proton donor/acceptor) is an active-site residue. Glutamate 274 serves as the catalytic Nucleophile. The cysteines at positions 287 and 394 are disulfide-linked. N-linked (GlcNAc...) asparagine glycans are attached at residues asparagine 300 and asparagine 379. A substrate-binding site is contributed by arginine 396. N-linked (GlcNAc...) asparagine glycosylation is found at asparagine 403, asparagine 558, asparagine 601, and asparagine 645.

Belongs to the glycosyl hydrolase 59 family. As to expression, detected in brain and kidney.

It localises to the lysosome. It carries out the reaction a beta-D-galactosyl-(1&lt;-&gt;1')-N-acylsphing-4-enine + H2O = an N-acylsphing-4-enine + D-galactose. The catalysed reaction is a D-galactosylceramide + H2O = an N-acyl-sphingoid base + D-galactose. It catalyses the reaction beta-D-galactosyl-(1&lt;-&gt;1)-sphing-4-enine + H2O = sphing-4-enine + D-galactose. Its function is as follows. Hydrolyzes the galactose ester bonds of glycolipids such as galactosylceramide and galactosylsphingosine. Enzyme with very low activity responsible for the lysosomal catabolism of galactosylceramide, a major lipid in myelin, kidney and epithelial cells of small intestine and colon. The sequence is that of Galactocerebrosidase from Mus musculus (Mouse).